The primary structure comprises 351 residues: Inositol monophosphatase 3 (351 aa).

Residues 11-31 form a helical membrane-spanning segment; sequence LGIGVFCLLALGVLYHVYSGF. Residues Glu121, Asp162, Leu164, Asp165, and Asp288 each coordinate Mg(2+). A substrate-binding site is contributed by Glu121. Residues 164 to 167 and Asp288 each bind substrate; that span reads LDAT.

The protein belongs to the inositol monophosphatase superfamily. Requires Mg(2+) as cofactor.

It is found in the membrane. It carries out the reaction a myo-inositol phosphate + H2O = myo-inositol + phosphate. The protein operates within polyol metabolism; myo-inositol biosynthesis; myo-inositol from D-glucose 6-phosphate: step 2/2. The polypeptide is Inositol monophosphatase 3 (bpnt2) (Xenopus laevis (African clawed frog)).